We begin with the raw amino-acid sequence, 148 residues long: Small ribosomal subunit protein bS16 (148 aa).

A disordered region spans residues A107–Q148. The span at A129–Q148 shows a compositional bias: low complexity.

The protein belongs to the bacterial ribosomal protein bS16 family.

The polypeptide is Small ribosomal subunit protein bS16 (Frankia alni (strain DSM 45986 / CECT 9034 / ACN14a)).